The sequence spans 361 residues: Chorismate synthase (361 aa).

NADP(+)-binding residues include Arg-48 and Arg-54. Residues 125–127, 238–239, Gly-278, 293–297, and Arg-319 contribute to the FMN site; these read RSS, NA, and KPTSS.

This sequence belongs to the chorismate synthase family. In terms of assembly, homotetramer. Requires FMNH2 as cofactor.

It catalyses the reaction 5-O-(1-carboxyvinyl)-3-phosphoshikimate = chorismate + phosphate. It participates in metabolic intermediate biosynthesis; chorismate biosynthesis; chorismate from D-erythrose 4-phosphate and phosphoenolpyruvate: step 7/7. In terms of biological role, catalyzes the anti-1,4-elimination of the C-3 phosphate and the C-6 proR hydrogen from 5-enolpyruvylshikimate-3-phosphate (EPSP) to yield chorismate, which is the branch point compound that serves as the starting substrate for the three terminal pathways of aromatic amino acid biosynthesis. This reaction introduces a second double bond into the aromatic ring system. The chain is Chorismate synthase from Escherichia coli O157:H7.